A 380-amino-acid polypeptide reads, in one-letter code: Cyclohex-1-ene-1-carbonyl-CoA dehydrogenase (380 aa).

Asp91 acts as the Proton acceptor in catalysis. The FAD site is built by Leu122, Ala124, Thr125, Ser131, and Thr157. Residue Ser131 participates in cyclohex-1-ene-1-carbonyl-CoA binding. Ser131 serves as a coordination point for cyclohexa-1,5-diene-1-carbonyl-CoA. Residues Lys178, Arg242, and Thr363 each coordinate cyclohex-1-ene-1-carbonyl-CoA. Cyclohexa-1,5-diene-1-carbonyl-CoA-binding residues include Lys178, Arg242, and Thr363. Residues Thr365 and Gln367 each coordinate FAD. Residue Arg375 coordinates cyclohex-1-ene-1-carbonyl-CoA. A cyclohexa-1,5-diene-1-carbonyl-CoA-binding site is contributed by Arg375.

It belongs to the acyl-CoA dehydrogenase family. As to quaternary structure, homotetramer. The cofactor is FAD.

It catalyses the reaction cyclohex-1-ene-1-carbonyl-CoA + oxidized [electron-transfer flavoprotein] + H(+) = cyclohexa-1,5-diene-1-carbonyl-CoA + reduced [electron-transfer flavoprotein]. Acyl-CoA dehydrogenase involved in the anaerobic degradation of cyclohexane carboxylic acid (CHC). Catalyzes the 1,4-dehydrogenation at C3 and C6 of cyclohex-1-ene-1-carbonyl-CoA (CHeneCoA or Ch1CoA) to cyclohexa-1,5-diene-1-carbonyl-CoA (CHdieneCoA or Ch1,5CoA). Also able to catalyze, at a lower rate, the dehydrogenation at C3 and C4 of CHdieneCoA to benzoyl-CoA. This is Cyclohex-1-ene-1-carbonyl-CoA dehydrogenase from Geobacter metallireducens (strain ATCC 53774 / DSM 7210 / GS-15).